The chain runs to 288 residues: Bifunctional protein FolD (288 aa).

Residues 166-168 and isoleucine 232 contribute to the NADP(+) site; that span reads GAS.

This sequence belongs to the tetrahydrofolate dehydrogenase/cyclohydrolase family. In terms of assembly, homodimer.

The catalysed reaction is (6R)-5,10-methylene-5,6,7,8-tetrahydrofolate + NADP(+) = (6R)-5,10-methenyltetrahydrofolate + NADPH. It carries out the reaction (6R)-5,10-methenyltetrahydrofolate + H2O = (6R)-10-formyltetrahydrofolate + H(+). It functions in the pathway one-carbon metabolism; tetrahydrofolate interconversion. Catalyzes the oxidation of 5,10-methylenetetrahydrofolate to 5,10-methenyltetrahydrofolate and then the hydrolysis of 5,10-methenyltetrahydrofolate to 10-formyltetrahydrofolate. This Salmonella enteritidis PT4 (strain P125109) protein is Bifunctional protein FolD.